Here is a 647-residue protein sequence, read N- to C-terminus: MSSECLLPYYTAHSYRSMGVFNTSMGNLQRQLYKGGEYDIFKYAPMFESDFIQISKKGEVIDVHNRVRMVTVCIASTSPVLPLPDVMLLARPAKVCEEHARRARFIKGRGYKPSKTLELTRLLPLKFVKISIHDHEKQQLRLKLATGRTFYLQLCPSSDAREDLFCYWEKLVYLLRPPVNSCISNPSIPTADTSTETKSTLVSEIHGEGDRDSKFQTSQDVSEATSAAFAGGERTQPNIAAILTTGLAKARAAGAAAGTGAAGTAGTAGAAGATGAAGATGAAGSARAAGGAGSARAAGATGSARAAGATGSARAAGATGSARAAGGNTAAAVMTPLAGLARAGTPTSPVSGVISIAATTSKSPGSGQVATGLTGTASKDQERSESSKAMAVVANITTESVDVVLAGAASFTSESPSAEGDAYGSPDTGLNVAFAGSITTKGPAEDKPEAPLVSTLQSEGYMCERDGSQKVSHTSSETQKEKRERRESDRKGSRKSSHHQRTGASRHSSSKDKGRKTSSYRSVSGHGKTREDKKEKGRGSLRDQRHSSSYRSESRTGHKSRKNRPAASGGFVSKRATKIRSFFRAFLVRPTLKTENTSGERGGVDIVTKLVEKQDIETTVEKSKDLEFSDTMASESMEKIILETKPI.

The segment covering 188–202 (IPTADTSTETKSTLV) has biased composition (polar residues). 4 disordered regions span residues 188 to 220 (IPTADTSTETKSTLVSEIHGEGDRDSKFQTSQD), 267 to 296 (TAGAAGATGAAGATGAAGSARAAGGAGSAR), 361 to 384 (SKSPGSGQVATGLTGTASKDQERS), and 465 to 573 (RDGS…GFVS). Residues 205 to 214 (IHGEGDRDSK) show a composition bias toward basic and acidic residues. Residues 361–378 (SKSPGSGQVATGLTGTAS) are compositionally biased toward polar residues. Position 378 is a phosphoserine (S378). The span at 478–491 (TQKEKRERRESDRK) shows a compositional bias: basic and acidic residues. Over residues 492–501 (GSRKSSHHQR) the composition is skewed to basic residues. A Bipartite nuclear localization signal motif is present at residues 494-511 (RKSSHHQRTGASRHSSSK). The span at 528-556 (KTREDKKEKGRGSLRDQRHSSSYRSESRT) shows a compositional bias: basic and acidic residues. Phosphoserine occurs at positions 634 and 636.

It belongs to the GARIN family. As to quaternary structure, interacts (via N-terminus) with RAB2B (in GTP-bound form). Interacts with FRG1.

The protein localises to the golgi apparatus. Its subcellular location is the nucleus. It is found in the cajal body. May be involved in RNA biogenesis. The protein is Golgi-associated RAB2B interactor protein 3 (Garin3) of Rattus norvegicus (Rat).